A 156-amino-acid polypeptide reads, in one-letter code: Transcription antitermination protein NusB (156 aa).

The protein belongs to the NusB family.

In terms of biological role, involved in transcription antitermination. Required for transcription of ribosomal RNA (rRNA) genes. Binds specifically to the boxA antiterminator sequence of the ribosomal RNA (rrn) operons. This is Transcription antitermination protein NusB from Vibrio cholerae serotype O1 (strain ATCC 39541 / Classical Ogawa 395 / O395).